The following is a 122-amino-acid chain: Small ribosomal subunit protein uS13 (122 aa).

The segment at 95-122 is disordered; sequence GLPVRGQRTHTNARTRKGKAKPIAGKKK.

Belongs to the universal ribosomal protein uS13 family. As to quaternary structure, part of the 30S ribosomal subunit. Forms a loose heterodimer with protein S19. Forms two bridges to the 50S subunit in the 70S ribosome.

In terms of biological role, located at the top of the head of the 30S subunit, it contacts several helices of the 16S rRNA. In the 70S ribosome it contacts the 23S rRNA (bridge B1a) and protein L5 of the 50S subunit (bridge B1b), connecting the 2 subunits; these bridges are implicated in subunit movement. Contacts the tRNAs in the A and P-sites. This chain is Small ribosomal subunit protein uS13, found in Sphingopyxis alaskensis (strain DSM 13593 / LMG 18877 / RB2256) (Sphingomonas alaskensis).